Reading from the N-terminus, the 290-residue chain is 30 kDa spicule matrix protein alpha (290 aa).

The first 20 residues, 1–20 (MRGFVYVLVCVLALASFSRA), serve as a signal peptide directing secretion. Residues 92–162 (ANMYCGQMHP…YTNWERMTAP (71 aa)) form the C-type lectin domain. Asn-102 is a glycosylation site (N-linked (GlcNAc...) asparagine).

In terms of tissue distribution, accumulates exclusively in mineralized tissues.

In terms of biological role, matrix protein of the sea urchin embryo spicule. The function of the matrix proteins is to direct crystal growth in certain orientations and inhibit growth in others. The protein is 30 kDa spicule matrix protein alpha (SM30A) of Strongylocentrotus purpuratus (Purple sea urchin).